We begin with the raw amino-acid sequence, 352 residues long: Glycerol-1-phosphate dehydrogenase [NAD(P)+] (352 aa).

NAD(+) is bound by residues 99 to 103 (GKSID) and 121 to 124 (TVAS). Substrate is bound at residue D126. S130 contributes to the NAD(+) binding site. Residue D173 coordinates substrate. Residues D173 and H253 each contribute to the Zn(2+) site. A substrate-binding site is contributed by H257. H269 lines the Zn(2+) pocket.

It belongs to the glycerol-1-phosphate dehydrogenase family. Homodimer. Zn(2+) is required as a cofactor.

It is found in the cytoplasm. It catalyses the reaction sn-glycerol 1-phosphate + NAD(+) = dihydroxyacetone phosphate + NADH + H(+). The catalysed reaction is sn-glycerol 1-phosphate + NADP(+) = dihydroxyacetone phosphate + NADPH + H(+). The protein operates within membrane lipid metabolism; glycerophospholipid metabolism. With respect to regulation, totally inhibited by EDTA in vitro. In terms of biological role, catalyzes the NAD(P)H-dependent reduction of dihydroxyacetonephosphate (DHAP or glycerone phosphate) to glycerol 1-phosphate (G1P). The G1P thus generated is used as the glycerophosphate backbone of phospholipids in the cellular membranes of Archaea. Is also able to catalyze the reverse reaction, i.e. the NAD(+)-dependent oxidation of G1P but not of G3P. Is not active toward glycerol, dihydroxyacetone, glyceraldehyde phosphate, and glycerol-2-phosphate. In Aeropyrum pernix (strain ATCC 700893 / DSM 11879 / JCM 9820 / NBRC 100138 / K1), this protein is Glycerol-1-phosphate dehydrogenase [NAD(P)+] (egsA).